We begin with the raw amino-acid sequence, 958 residues long: Glycine dehydrogenase (decarboxylating) (958 aa).

At Lys705 the chain carries N6-(pyridoxal phosphate)lysine.

Belongs to the GcvP family. The glycine cleavage system is composed of four proteins: P, T, L and H. Requires pyridoxal 5'-phosphate as cofactor.

The catalysed reaction is N(6)-[(R)-lipoyl]-L-lysyl-[glycine-cleavage complex H protein] + glycine + H(+) = N(6)-[(R)-S(8)-aminomethyldihydrolipoyl]-L-lysyl-[glycine-cleavage complex H protein] + CO2. Functionally, the glycine cleavage system catalyzes the degradation of glycine. The P protein binds the alpha-amino group of glycine through its pyridoxal phosphate cofactor; CO(2) is released and the remaining methylamine moiety is then transferred to the lipoamide cofactor of the H protein. The sequence is that of Glycine dehydrogenase (decarboxylating) from Bdellovibrio bacteriovorus (strain ATCC 15356 / DSM 50701 / NCIMB 9529 / HD100).